Reading from the N-terminus, the 215-residue chain is Oligoribonuclease (215 aa).

The 166-residue stretch at Leu5–Leu170 folds into the Exonuclease domain. The active site involves Tyr127. Positions Leu196–Gly215 are disordered. The segment covering Ala202–Gly215 has biased composition (low complexity).

This sequence belongs to the oligoribonuclease family.

Its subcellular location is the cytoplasm. 3'-to-5' exoribonuclease specific for small oligoribonucleotides. This Mycolicibacterium paratuberculosis (strain ATCC BAA-968 / K-10) (Mycobacterium paratuberculosis) protein is Oligoribonuclease.